A 229-amino-acid chain; its full sequence is Large ribosomal subunit protein uL1 (229 aa).

The protein belongs to the universal ribosomal protein uL1 family. In terms of assembly, part of the 50S ribosomal subunit.

In terms of biological role, binds directly to 23S rRNA. The L1 stalk is quite mobile in the ribosome, and is involved in E site tRNA release. Its function is as follows. Protein L1 is also a translational repressor protein, it controls the translation of the L11 operon by binding to its mRNA. This Streptococcus pneumoniae (strain ATCC 700669 / Spain 23F-1) protein is Large ribosomal subunit protein uL1.